The chain runs to 412 residues: Yellow-related salivary protein LJM17 (412 aa).

Residues 1–18 (MRFFFVFLAIVLFQGIHG) form the signal peptide. Residue Asn-29 is glycosylated (N-linked (GlcNAc...) asparagine).

The protein belongs to the major royal jelly protein family. As to expression, salivary gland.

The protein resides in the secreted. Its function is as follows. Probably modulates blood feeding of sand flies on vertebrate species by binding and sequestering different mediators involved in the host response. Binds biogenic amines. Binds serotonin with high affinity. Binds noradrenaline but not adrenaline. Binds dopamine and octopamine. Binds histamine. Inhibits host smooth muscle contraction induced by histamine in bioassay with guinea pig ileum. Immunogenic; elicits antibody production in the host. Functions as a chemoattractant for host neutrophils; likely acts through a G-protein-coupled receptor and effect is dependent on calcium influx. The sequence is that of Yellow-related salivary protein LJM17 from Lutzomyia longipalpis (Sand fly).